Consider the following 223-residue polypeptide: Ribonuclease T (223 aa).

Positions 20–194 (VVIDVETAGF…YDTERTAELF (175 aa)) constitute an Exonuclease domain. The Mg(2+) site is built by Asp-23, Glu-25, His-181, and Asp-186. His-181 functions as the Proton donor/acceptor in the catalytic mechanism.

This sequence belongs to the RNase T family. As to quaternary structure, homodimer. Requires Mg(2+) as cofactor.

Trims short 3' overhangs of a variety of RNA species, leaving a one or two nucleotide 3' overhang. Responsible for the end-turnover of tRNA: specifically removes the terminal AMP residue from uncharged tRNA (tRNA-C-C-A). Also appears to be involved in tRNA biosynthesis. The chain is Ribonuclease T from Shewanella sp. (strain W3-18-1).